A 123-amino-acid chain; its full sequence is Hydrogenase maturation factor HypA (123 aa).

H2 lines the Ni(2+) pocket. Zn(2+) is bound by residues C73, C76, C90, and C93.

Belongs to the HypA/HybF family.

Its function is as follows. Involved in the maturation of [NiFe] hydrogenases. Required for nickel insertion into the metal center of the hydrogenase. The polypeptide is Hydrogenase maturation factor HypA (Roseiflexus sp. (strain RS-1)).